The following is a 22-amino-acid chain: Zinc metalloproteinase oxiagin (22 aa).

Residues C14–V22 enclose the Peptidase M12B domain.

The protein belongs to the venom metalloproteinase (M12B) family. P-III subfamily. P-IIId sub-subfamily. Heterotrimer; disulfide-linked. The heterotrimer consists of 1 metalloproteinase chain and 2 lectin chains. The cofactor is Zn(2+). N-glycosylated. Expressed by the venom gland.

Its subcellular location is the secreted. Snake venom metalloproteinase that inhibits the classical complement pathway dose-dependently. It acts by binding to carbohydrates of IgG within the antibody-sensitized sheep erythrocytes (EA) complex, and thus prevents interaction of component C2 with immobilized C4b. Also induces cation-independent hemagglutination that can be prevented by D-galactose pretreatment. The chain is Zinc metalloproteinase oxiagin from Naja oxiana (Central Asian cobra).